Reading from the N-terminus, the 363-residue chain is Phosphoserine aminotransferase (363 aa).

An L-glutamate-binding site is contributed by arginine 42. Pyridoxal 5'-phosphate-binding positions include 76–77 (AR), tryptophan 104, threonine 155, aspartate 175, and glutamine 198. Lysine 199 carries the post-translational modification N6-(pyridoxal phosphate)lysine. 240–241 (NT) is a binding site for pyridoxal 5'-phosphate.

The protein belongs to the class-V pyridoxal-phosphate-dependent aminotransferase family. SerC subfamily. Homodimer. It depends on pyridoxal 5'-phosphate as a cofactor.

It localises to the cytoplasm. It catalyses the reaction O-phospho-L-serine + 2-oxoglutarate = 3-phosphooxypyruvate + L-glutamate. The enzyme catalyses 4-(phosphooxy)-L-threonine + 2-oxoglutarate = (R)-3-hydroxy-2-oxo-4-phosphooxybutanoate + L-glutamate. It functions in the pathway amino-acid biosynthesis; L-serine biosynthesis; L-serine from 3-phospho-D-glycerate: step 2/3. The protein operates within cofactor biosynthesis; pyridoxine 5'-phosphate biosynthesis; pyridoxine 5'-phosphate from D-erythrose 4-phosphate: step 3/5. Functionally, catalyzes the reversible conversion of 3-phosphohydroxypyruvate to phosphoserine and of 3-hydroxy-2-oxo-4-phosphonooxybutanoate to phosphohydroxythreonine. The protein is Phosphoserine aminotransferase (serC) of Edwardsiella ictaluri (strain 93-146).